The primary structure comprises 174 residues: Peptide methionine sulfoxide reductase MsrA (174 aa).

Cys10 is an active-site residue.

The protein belongs to the MsrA Met sulfoxide reductase family.

The catalysed reaction is L-methionyl-[protein] + [thioredoxin]-disulfide + H2O = L-methionyl-(S)-S-oxide-[protein] + [thioredoxin]-dithiol. It catalyses the reaction [thioredoxin]-disulfide + L-methionine + H2O = L-methionine (S)-S-oxide + [thioredoxin]-dithiol. In terms of biological role, has an important function as a repair enzyme for proteins that have been inactivated by oxidation. Catalyzes the reversible oxidation-reduction of methionine sulfoxide in proteins to methionine. The protein is Peptide methionine sulfoxide reductase MsrA of Paenarthrobacter aurescens (strain TC1).